A 514-amino-acid chain; its full sequence is MKDQVIIFDTTLRDGEQALSASLTVKEKLQIAYALERLGVDVIEAGFPISSPGDFESVQTIAKHIKNSRVCALSRAVAKDIDVAAESLKVAEAFRIHTFISTSTIHVQDKLRRSYDDVIEMAIAAVKRARNYTDDVEFSCEDAGRTPIDNLCRMVEAAINAGARTINIPDTVGYTLPSEFGGIVAQLFNRVPNIDKAIISVHCHDDLGMSVANSMAAVQAGARQVEGTINGLGERAGNCSLEEIAMIIKTRSDFLGVETNIKHEEIHRTSKMVSQLCNMPIQANKAIVGANAFNHSSGIHQDGMIKNKNTYEIMTPESIGLKSQALNLTSRSGRAAVKNHMDTLGYIDGDYNLDTLYADFLKLADRKGQVFDYDLEALMYFANLRDEDDFFKLNYLSVQSGSIMATTSIKLQCGDEEKCEAAVGNGPVDALYQCIYRLTGYEIALDKFDLTAKGEGEDGLGQADIIANYKGRKYHGTGLATDIVEASGQALLHVINSIYRADQIAEIKERIATV.

The Pyruvate carboxyltransferase domain occupies Val5–His267. Mn(2+)-binding residues include Asp14, His202, His204, and Asn238. The tract at residues Lys392 to Val514 is regulatory domain.

It belongs to the alpha-IPM synthase/homocitrate synthase family. LeuA type 1 subfamily. As to quaternary structure, homodimer. It depends on Mn(2+) as a cofactor.

The protein resides in the cytoplasm. It carries out the reaction 3-methyl-2-oxobutanoate + acetyl-CoA + H2O = (2S)-2-isopropylmalate + CoA + H(+). It participates in amino-acid biosynthesis; L-leucine biosynthesis; L-leucine from 3-methyl-2-oxobutanoate: step 1/4. In terms of biological role, catalyzes the condensation of the acetyl group of acetyl-CoA with 3-methyl-2-oxobutanoate (2-ketoisovalerate) to form 3-carboxy-3-hydroxy-4-methylpentanoate (2-isopropylmalate). In Photobacterium profundum (strain SS9), this protein is 2-isopropylmalate synthase.